Consider the following 271-residue polypeptide: MLSSTDLVQAVTADLGKIRETAPLVLSLTNSVVQPLTANLLLAIGAVPAMLNDAEEAVDMLRSGTGALLVNLGTVTREQGAAMQTAVREANRLNIPWVLDPVAVGALSLRTRLAGQLKEQSPRIIRGNASEIMALAGYSSVTKGPESTSSSADALHAARELALHTGAAVLVTGRTDYSTDGRQVTATENGHAMMSRVTGVGCSMGALSAACAAVSPTPLQAAVSTAVLMGIAGEMAFEQSPSPGSFAVSLLDSLYALSPEDVVRRARFLSL.

Met50 provides a ligand contact to substrate. ATP contacts are provided by Arg126 and Thr172. Gly199 serves as a coordination point for substrate.

This sequence belongs to the Thz kinase family. The cofactor is Mg(2+).

The enzyme catalyses 5-(2-hydroxyethyl)-4-methylthiazole + ATP = 4-methyl-5-(2-phosphooxyethyl)-thiazole + ADP + H(+). Its pathway is cofactor biosynthesis; thiamine diphosphate biosynthesis; 4-methyl-5-(2-phosphoethyl)-thiazole from 5-(2-hydroxyethyl)-4-methylthiazole: step 1/1. Catalyzes the phosphorylation of the hydroxyl group of 4-methyl-5-beta-hydroxyethylthiazole (THZ). This chain is Hydroxyethylthiazole kinase, found in Akkermansia muciniphila (strain ATCC BAA-835 / DSM 22959 / JCM 33894 / BCRC 81048 / CCUG 64013 / CIP 107961 / Muc).